Consider the following 396-residue polypeptide: MRKLFTSESVTEGHPDKICDQISDAVLDAILEKDPYARVACEVAVTTGLVLVMGEITTKCYVDIPKIARDTIREIGYTRAKYGFDADTCAVITSIDEQSPDIAMGVDKALEAKLGEMTDDEIEAIGAGDQGMMFGFACDETPVLMPMPIYLAHKLARRLAYVRKGGILPYLRPDGKTQVTVEYEDDRPIRVDTIVVSTQHSPEVTHAQIEADVIEHVIKPIIPEGMLDKNTKIYINPTGRFVIGGPQGDSGLTGRKIIVDTYGGYARHGGGAFSGKDPTKVDRSATYAARYVAKNIVAAGLAKKCEVQLSYAIGVARPLSIRVDTFGTGKIDDEKIAEIVKRVFDLRPAAIIRDLDLRRPIYKKVAAYGHFGREDLDLPWERTDKVDIILKEAQNI.

Residue H14 coordinates ATP. D16 is a Mg(2+) binding site. Position 42 (E42) interacts with K(+). 2 residues coordinate L-methionine: E55 and Q98. Residues 98-108 are flexible loop; it reads QSPDIAMGVDK. ATP contacts are provided by residues 174 to 176, 240 to 241, D249, 255 to 256, A272, and K276; these read DGK, RF, and RK. D249 provides a ligand contact to L-methionine. Position 280 (K280) interacts with L-methionine.

This sequence belongs to the AdoMet synthase family. Homotetramer; dimer of dimers. The cofactor is Mg(2+). K(+) is required as a cofactor.

It localises to the cytoplasm. It carries out the reaction L-methionine + ATP + H2O = S-adenosyl-L-methionine + phosphate + diphosphate. It functions in the pathway amino-acid biosynthesis; S-adenosyl-L-methionine biosynthesis; S-adenosyl-L-methionine from L-methionine: step 1/1. Functionally, catalyzes the formation of S-adenosylmethionine (AdoMet) from methionine and ATP. The overall synthetic reaction is composed of two sequential steps, AdoMet formation and the subsequent tripolyphosphate hydrolysis which occurs prior to release of AdoMet from the enzyme. The protein is S-adenosylmethionine synthase of Caldicellulosiruptor saccharolyticus (strain ATCC 43494 / DSM 8903 / Tp8T 6331).